The following is a 37-amino-acid chain: Large ribosomal subunit protein bL36 (37 aa).

This sequence belongs to the bacterial ribosomal protein bL36 family.

This chain is Large ribosomal subunit protein bL36, found in Sulfurimonas denitrificans (strain ATCC 33889 / DSM 1251) (Thiomicrospira denitrificans (strain ATCC 33889 / DSM 1251)).